The chain runs to 1274 residues: Polycomb protein Sfmbt (1274 aa).

The tract at residues 266 to 285 is disordered; sequence PSSKQMKGYRNSNSSGTSSA. The segment covering 267 to 278 has biased composition (polar residues); the sequence is SSKQMKGYRNSN. The FCS-type zinc finger occupies 331–366; the sequence is PIQKDGMAVCERCGAIGVKHTFYTKSRRFCSMACAR. 4 residues coordinate Zn(2+): Cys340, Cys343, Cys360, and Cys364. Residues 381 to 394 are compositionally biased toward low complexity; it reads TGATTSNNQSTSSS. Disordered regions lie at residues 381–401 and 488–510; these read TGAT…AASG and PGGE…SGYL. Residues 494–509 are compositionally biased toward polar residues; sequence GSGNDTSTPNTASSGY. MBT repeat units follow at residues 564–675, 683–781, 789–899, and 907–1003; these read YDWL…LIPP, KDWK…LAAP, LAGR…VTPP, and FTWE…LEGP. Disordered stretches follow at residues 1007–1063 and 1083–1167; these read SYQQ…TTPH and YENN…NSSA. A compositionally biased stretch (basic residues) spans 1019-1028; the sequence is KVPRKKKTKK. A compositionally biased stretch (low complexity) spans 1038–1050; it reads AKQQNDNTQTTQT. Positions 1087-1114 are enriched in acidic residues; that stretch reads QPEDGDGDEEDPDPDADADLDADADGDG. Polar residues-rich tracts occupy residues 1117–1128 and 1158–1167; these read STSHISEQSTTH and GNSNKMNSSA. Residues 1194–1258 enclose the SAM domain; the sequence is WNVYDVSQFL…DLITQLKCKV (65 aa).

In terms of assembly, interacts with pho as a component of the pho-repressive complex (PhoRC).

The protein localises to the nucleus. In terms of biological role, polycomb group (PcG) protein that binds to the Polycomb response elements (PREs) found in the regulatory regions of many genes. PcG proteins act by forming multiprotein complexes, which are required to maintain the transcriptionally repressive state of homeotic genes throughout development. PcG proteins are not required to initiate repression, but to maintain it during later stages of development. They probably act via the methylation of histones, rendering chromatin heritably changed in its expressibility. Necessary but not sufficient to recruit a functional PcG repressive complex that represses target genes, suggesting that the recruitment of the distinct PRC1 complex is also required to allow a subsequent repression. The chain is Polycomb protein Sfmbt from Drosophila pseudoobscura pseudoobscura (Fruit fly).